An 863-amino-acid chain; its full sequence is Paramyosin (863 aa).

The nonhelical region stretch occupies residues 1-26; it reads MSESHVKISRTIIRGTSPSTVRLESP. Positions 27-836 form a coiled coil; sequence VRELEDLLDL…ERTITIKRTI (810 aa). Positions 837–863 are nonhelical region; it reads GGPGSRAVSVVREINSVSRGNRATSIM.

The protein belongs to the paramyosin family. As to quaternary structure, homodimer.

The protein localises to the cytoplasm. Its subcellular location is the myofibril. Paramyosin is a major structural component of many thick filaments isolated from invertebrate muscles. The polypeptide is Paramyosin (Echinococcus granulosus (Hydatid tapeworm)).